The sequence spans 355 residues: Alanine racemase (355 aa).

Lysine 34 acts as the Proton acceptor; specific for D-alanine in catalysis. Lysine 34 carries the N6-(pyridoxal phosphate)lysine modification. Arginine 133 lines the substrate pocket. The active-site Proton acceptor; specific for L-alanine is tyrosine 249. Position 297 (methionine 297) interacts with substrate.

This sequence belongs to the alanine racemase family. Pyridoxal 5'-phosphate serves as cofactor.

The catalysed reaction is L-alanine = D-alanine. Its pathway is amino-acid biosynthesis; D-alanine biosynthesis; D-alanine from L-alanine: step 1/1. Functionally, catalyzes the interconversion of L-alanine and D-alanine. May also act on other amino acids. This chain is Alanine racemase (alr), found in Rickettsia canadensis (strain McKiel).